The following is a 138-amino-acid chain: Holo-[acyl-carrier-protein] synthase (138 aa).

Mg(2+)-binding residues include aspartate 11 and glutamate 65.

This sequence belongs to the P-Pant transferase superfamily. AcpS family. Mg(2+) is required as a cofactor.

The protein resides in the cytoplasm. The catalysed reaction is apo-[ACP] + CoA = holo-[ACP] + adenosine 3',5'-bisphosphate + H(+). Functionally, transfers the 4'-phosphopantetheine moiety from coenzyme A to a Ser of acyl-carrier-protein. The polypeptide is Holo-[acyl-carrier-protein] synthase (Ralstonia nicotianae (strain ATCC BAA-1114 / GMI1000) (Ralstonia solanacearum)).